A 263-amino-acid chain; its full sequence is Dihydromethanophenazine:CoB--CoM heterodisulfide reductase subunit E (263 aa).

The next 5 membrane-spanning stretches (helical) occupy residues Thr18–Ile38, Val108–Phe128, Phe150–Leu170, Ile184–Ala204, and Val221–Ile241.

Belongs to the HdrE family. As to quaternary structure, the dihydromethanophenazine:CoB--CoM heterodisulfide reductase is composed of two subunits; HdrD and HdrE. Heme b is required as a cofactor.

The protein localises to the cell membrane. It catalyses the reaction methanophenazine + coenzyme B + coenzyme M = dihydromethanophenazine + coenzyme M-coenzyme B heterodisulfide. It functions in the pathway cofactor metabolism; coenzyme M-coenzyme B heterodisulfide reduction; coenzyme B and coenzyme M from coenzyme M-coenzyme B heterodisulfide: step 1/1. Functionally, part of a complex that catalyzes the reversible reduction of CoM-S-S-CoB to the thiol-coenzymes H-S-CoM (coenzyme M) and H-S-CoB (coenzyme B). HdrE may be responsible for anchoring the complex to the membrane. The chain is Dihydromethanophenazine:CoB--CoM heterodisulfide reductase subunit E (hdrE) from Methanosarcina barkeri (strain Fusaro / DSM 804).